A 170-amino-acid chain; its full sequence is Large ribosomal subunit protein uL10 (170 aa).

Belongs to the universal ribosomal protein uL10 family. As to quaternary structure, part of the ribosomal stalk of the 50S ribosomal subunit. The N-terminus interacts with L11 and the large rRNA to form the base of the stalk. The C-terminus forms an elongated spine to which L12 dimers bind in a sequential fashion forming a multimeric L10(L12)X complex.

Its function is as follows. Forms part of the ribosomal stalk, playing a central role in the interaction of the ribosome with GTP-bound translation factors. The chain is Large ribosomal subunit protein uL10 (rplJ) from Chlamydia pneumoniae (Chlamydophila pneumoniae).